A 366-amino-acid chain; its full sequence is Aminomethyltransferase (366 aa).

This sequence belongs to the GcvT family. As to quaternary structure, the glycine cleavage system is composed of four proteins: P, T, L and H.

The catalysed reaction is N(6)-[(R)-S(8)-aminomethyldihydrolipoyl]-L-lysyl-[protein] + (6S)-5,6,7,8-tetrahydrofolate = N(6)-[(R)-dihydrolipoyl]-L-lysyl-[protein] + (6R)-5,10-methylene-5,6,7,8-tetrahydrofolate + NH4(+). The glycine cleavage system catalyzes the degradation of glycine. The polypeptide is Aminomethyltransferase (Sodalis glossinidius (strain morsitans)).